The primary structure comprises 111 residues: Large ribosomal subunit protein uL24 (111 aa).

The interval 85-111 (NTNDPRRKDIINRKASRQKEEQGGKAQ) is disordered. Basic and acidic residues predominate over residues 88–111 (DPRRKDIINRKASRQKEEQGGKAQ).

This sequence belongs to the universal ribosomal protein uL24 family. In terms of assembly, part of the 50S ribosomal subunit.

Functionally, one of two assembly initiator proteins, it binds directly to the 5'-end of the 23S rRNA, where it nucleates assembly of the 50S subunit. Its function is as follows. Located at the polypeptide exit tunnel on the outside of the subunit. The sequence is that of Large ribosomal subunit protein uL24 from Metallosphaera sedula (strain ATCC 51363 / DSM 5348 / JCM 9185 / NBRC 15509 / TH2).